The sequence spans 324 residues: NADH-quinone oxidoreductase subunit H 2 (324 aa).

Transmembrane regions (helical) follow at residues 1 to 21, 77 to 97, 109 to 129, 147 to 167, 179 to 199, 214 to 234, 238 to 258, 263 to 283, and 298 to 318; these read MIGMALTAIISTMLIMVLLVV, ILAPMVAATPVLAGFGVVAFG, VMFLLGMMGLTVYGVVLGALA, LGYEAFLGLSLLGVVMIAGSL, VWFVLLQPFGAALFCIAGVAA, LVAGYLTEYTGMSFGLFFLGE, VLLVASLAVTLFFGGWLGPVW, LPGPIWFGLKVGVIALIFIWI, and FAWKIALPLALANLLLTGLIV.

Belongs to the complex I subunit 1 family. NDH-1 is composed of 14 different subunits. Subunits NuoA, H, J, K, L, M, N constitute the membrane sector of the complex.

The protein resides in the cell inner membrane. It catalyses the reaction a quinone + NADH + 5 H(+)(in) = a quinol + NAD(+) + 4 H(+)(out). In terms of biological role, NDH-1 shuttles electrons from NADH, via FMN and iron-sulfur (Fe-S) centers, to quinones in the respiratory chain. The immediate electron acceptor for the enzyme in this species is believed to be ubiquinone. Couples the redox reaction to proton translocation (for every two electrons transferred, four hydrogen ions are translocated across the cytoplasmic membrane), and thus conserves the redox energy in a proton gradient. This subunit may bind ubiquinone. This is NADH-quinone oxidoreductase subunit H 2 from Rhodopseudomonas palustris (strain BisB18).